Reading from the N-terminus, the 273-residue chain is Undecaprenyl-diphosphatase (273 aa).

Helical transmembrane passes span 3-23 (IVEIIKAIILGMVEGLTEFAP), 48-68 (AANTFKVVIQLGSILAVVVVF), 92-112 (MQVIVGLIPAGVLGVLFEDYI), 116-136 (LFSTATVLIGLVLGALLMIAA), 152-172 (ITYKQALIVGLVQCLSLWPGF), 193-213 (ADFTFIMAVPIMMGASVLSLL), 220-240 (TIDALPFFTAGFISAFLFALI), and 252-272 (IRLVPFAVYRIVLALVIYIVY).

The protein belongs to the UppP family.

It localises to the cell membrane. The enzyme catalyses di-trans,octa-cis-undecaprenyl diphosphate + H2O = di-trans,octa-cis-undecaprenyl phosphate + phosphate + H(+). Catalyzes the dephosphorylation of undecaprenyl diphosphate (UPP). Confers resistance to bacitracin. This is Undecaprenyl-diphosphatase from Geobacillus sp. (strain WCH70).